The chain runs to 211 residues: Arginine exporter protein ArgO (211 aa).

The next 6 helical transmembrane spans lie at 1 to 21 (MFTY…PLGP), 37 to 57 (LMIA…GIFG), 68 to 88 (LLAL…FGAL), 111 to 131 (IIIT…DTFV), 147 to 167 (WFAL…ALLA), and 179 to 199 (AQRI…FQLA).

Belongs to the LysE/ArgO transporter (TC 2.A.75) family.

The protein localises to the cell inner membrane. The catalysed reaction is L-arginine(in) = L-arginine(out). Functionally, involved in the export of arginine. Important to control the intracellular level of arginine and the correct balance between arginine and lysine. The protein is Arginine exporter protein ArgO of Klebsiella pneumoniae subsp. pneumoniae (strain ATCC 700721 / MGH 78578).